The primary structure comprises 634 residues: MLCCMRICVCGDEGTGKSSLITSLVKGVFVTNKIQPILPQITIPPTIGTPENVTTTTVVDTSAVPQERSNLAREIRKSNVILLVYSDHYSYERVALFWLPYFRSLGVNVPVVLCANKSDLAADHTETQVIEDEMLPLMSEFKEIDSCIRTSAREHRNVNEAFFLCQKAVTHPIAPLFDAKESALKPAAVAALQRIFYLSDKDRDGYLSDKEIKDFQMRCFEKPLSEEDLVHIKETIQKTHPDSVTPSGIDCRGFIHLNKMYAEKGRHETVWIILRAFQYTDSLSLQESYLHPKFEVPPFASAELSPEGYRFFVNLFLLSDKDNDGGLNDAELASLFAPTPGLPPSWADGSFPSCTVRNEAGHVTLQGWLAQWSMTTFTSPKTTLEYLAYLGFESSDRSNPSTTAALKVTRPRKRRKRPGRVGRNVVLGHIVGAPGSGKSALLDAFLSRGFSTTYHPTIQPRTAVNTVELPGGKQCYLIMDELGELEPAILENQAKLLDQCDVIVYTYDSSDPDSFAYIPALRAKYPHLEELPSVYIALKADLDRTTQRAEHQPHEYTALLNMPGPPLHVSVTWSSIQEVFVHIAEAAMEPSTAFPRSEEDVEGKWMSWGIALGAVVCAGAAAVMIWRRVSGSGV.

Over 1–604 (MLCCMRICVC…PRSEEDVEGK (604 aa)) the chain is Cytoplasmic. The 170-residue stretch at 2 to 171 (LCCMRICVCG…FFLCQKAVTH (170 aa)) folds into the Miro 1 domain. GTP is bound by residues 11–18 (GDEGTGKS), 60–64 (DTSAV), and 116–119 (NKSD). 2 EF-hand domains span residues 187–222 (AAVA…CFEK) and 307–342 (EGYR…TPGL). Ca(2+) is bound by residues aspartate 200, aspartate 202, aspartate 204, tyrosine 206, glutamate 211, aspartate 320, aspartate 322, aspartate 324, and glutamate 331. A disordered region spans residues 399 to 419 (NPSTTAALKVTRPRKRRKRPG). Positions 409–419 (TRPRKRRKRPG) are enriched in basic residues. The Miro 2 domain occupies 423–589 (RNVVLGHIVG…FVHIAEAAME (167 aa)). GTP is bound by residues 432–439 (GAPGSGKS), 468–472 (ELPGG), and 538–541 (LKAD). Residues 605–625 (WMSWGIALGAVVCAGAAAVMI) traverse the membrane as a helical; Anchor for type IV membrane protein segment. The Mitochondrial intermembrane segment spans residues 626 to 634 (WRRVSGSGV).

This sequence belongs to the mitochondrial Rho GTPase family.

It is found in the mitochondrion outer membrane. In terms of biological role, mitochondrial GTPase involved in mitochondrial trafficking. Probably involved in control of anterograde transport of mitochondria and their subcellular distribution. The chain is Mitochondrial Rho GTPase 1 (gem1) from Emericella nidulans (strain FGSC A4 / ATCC 38163 / CBS 112.46 / NRRL 194 / M139) (Aspergillus nidulans).